Consider the following 473-residue polypeptide: Photosystem II CP43 reaction center protein (473 aa).

The propeptide occupies 1-14 (MKTLYSLRRFYPVE). N-acetylthreonine is present on T15. T15 is modified (phosphothreonine). 5 helical membrane passes run 69 to 93 (LFEV…PHLA), 134 to 155 (LLGP…KDRN), 178 to 200 (KALY…RKIT), 255 to 275 (KPFA…LSYS), and 291 to 312 (WFNN…ASQA). [CaMn4O5] cluster is bound at residue E367. Residues 447-471 (RARAAAAGFEKGIDRDLEPVLSMTP) form a helical membrane-spanning segment.

It belongs to the PsbB/PsbC family. PsbC subfamily. In terms of assembly, PSII is composed of 1 copy each of membrane proteins PsbA, PsbB, PsbC, PsbD, PsbE, PsbF, PsbH, PsbI, PsbJ, PsbK, PsbL, PsbM, PsbT, PsbX, PsbY, PsbZ, Psb30/Ycf12, at least 3 peripheral proteins of the oxygen-evolving complex and a large number of cofactors. It forms dimeric complexes. Binds multiple chlorophylls and provides some of the ligands for the Ca-4Mn-5O cluster of the oxygen-evolving complex. It may also provide a ligand for a Cl- that is required for oxygen evolution. PSII binds additional chlorophylls, carotenoids and specific lipids. serves as cofactor.

The protein resides in the plastid. It is found in the chloroplast thylakoid membrane. One of the components of the core complex of photosystem II (PSII). It binds chlorophyll and helps catalyze the primary light-induced photochemical processes of PSII. PSII is a light-driven water:plastoquinone oxidoreductase, using light energy to abstract electrons from H(2)O, generating O(2) and a proton gradient subsequently used for ATP formation. The chain is Photosystem II CP43 reaction center protein from Phalaenopsis aphrodite subsp. formosana (Moth orchid).